A 647-amino-acid chain; its full sequence is Protein RAD61 (647 aa).

Positions 1-90 (MRAYGKRGPV…QLDSKRNDQN (90 aa)) are disordered. Over residues 66–82 (DSSSSFDGANEKPSSQL) the composition is skewed to polar residues.

The protein resides in the nucleus. Involved in resistance to ionizing radiation. The polypeptide is Protein RAD61 (RAD61) (Saccharomyces cerevisiae (strain ATCC 204508 / S288c) (Baker's yeast)).